The chain runs to 196 residues: Cell division protein SepF (196 aa).

The interval Val-15–Lys-80 is disordered. Residues Arg-56–Ser-79 are compositionally biased toward polar residues.

Belongs to the SepF family. Homodimer. Interacts with FtsZ.

It is found in the cytoplasm. Cell division protein that is part of the divisome complex and is recruited early to the Z-ring. Probably stimulates Z-ring formation, perhaps through the cross-linking of FtsZ protofilaments. Its function overlaps with FtsA. This chain is Cell division protein SepF, found in Lactococcus lactis subsp. cremoris (strain SK11).